Consider the following 607-residue polypeptide: Phosphomethylpyrimidine synthase (607 aa).

Substrate-binding positions include Asn216, Met245, Tyr274, His310, 330-332, 371-374, and Glu410; these read SRG and DGLR. A Zn(2+)-binding site is contributed by His414. Tyr437 contacts substrate. Position 478 (His478) interacts with Zn(2+). Residues Cys558, Cys561, and Cys566 each contribute to the [4Fe-4S] cluster site.

This sequence belongs to the ThiC family. As to quaternary structure, homodimer. It depends on [4Fe-4S] cluster as a cofactor.

It catalyses the reaction 5-amino-1-(5-phospho-beta-D-ribosyl)imidazole + S-adenosyl-L-methionine = 4-amino-2-methyl-5-(phosphooxymethyl)pyrimidine + CO + 5'-deoxyadenosine + formate + L-methionine + 3 H(+). The protein operates within cofactor biosynthesis; thiamine diphosphate biosynthesis. Catalyzes the synthesis of the hydroxymethylpyrimidine phosphate (HMP-P) moiety of thiamine from aminoimidazole ribotide (AIR) in a radical S-adenosyl-L-methionine (SAM)-dependent reaction. The protein is Phosphomethylpyrimidine synthase of Agrobacterium fabrum (strain C58 / ATCC 33970) (Agrobacterium tumefaciens (strain C58)).